The following is a 1367-amino-acid chain: Paired amphipathic helix protein Sin3-like 2 (1367 aa).

Positions 14-44 (QFKRPLGSSRGESYEQSPITGGGSIGEGGIN) are disordered. Over residues 33 to 42 (TGGGSIGEGG) the composition is skewed to gly residues. 2 PAH domains span residues 46–116 (QKLT…LPKG) and 130–200 (KTVE…LPDS). The segment at 212-322 (SQAQRYDDRG…EAYSGPASHS (111 aa)) is disordered. 2 stretches are compositionally biased toward basic and acidic residues: residues 230-286 (MFME…SRDL) and 299-311 (FSEK…RMEG). In terms of domain architecture, PAH 3 spans 327-396 (LKSMYNQAFL…DEFNQFFERC (70 aa)). Disordered regions lie at residues 417 to 446 (EENL…KERS), 786 to 883 (DVHA…LSKP), 912 to 946 (QSDT…DSED), and 958 to 1031 (ATAK…EGME). 2 stretches are compositionally biased toward basic and acidic residues: residues 424-446 (VKGE…KERS) and 806-819 (SSGK…DLAN). 2 stretches are compositionally biased toward polar residues: residues 851-876 (ATSS…SSGS) and 912-923 (QSDTSKANSNYD). Residues 958 to 967 (ATAKTEHSVE) show a composition bias toward basic and acidic residues. 2 stretches are compositionally biased toward acidic residues: residues 968–989 (AEGE…EAGE) and 997–1016 (IGDE…EHDE). A Phosphoserine modification is found at S1023.

The protein localises to the nucleus. Functionally, acts as a transcriptional repressor. Plays roles in regulating gene expression and genome stability. The protein is Paired amphipathic helix protein Sin3-like 2 (SNL2) of Arabidopsis thaliana (Mouse-ear cress).